The following is a 242-amino-acid chain: MSKMTKKMKKICEIKSSLKDYKFNNLISILNSFPKAKFNENIDVAINLRINTKKSDQNIRGSIILPNSIKKEKYIVVFASGEDKKNAYEAGANLAGMEEVSDKIKNNKKLKIDHVISTPEAMPIVEKLGSILGPKGLMPNPKLGTITKDIKNEIKKIKSGQLNYKNDKYGIIHTTIGKINFNNLELKINLLYFLNHLVKTKPTNLKGVFIKKVSLSTTMGGSVIINHNEFLQENNISDNIKK.

This sequence belongs to the universal ribosomal protein uL1 family. In terms of assembly, part of the 50S ribosomal subunit.

Binds directly to 23S rRNA. The L1 stalk is quite mobile in the ribosome, and is involved in E site tRNA release. Functionally, protein L1 is also a translational repressor protein, it controls the translation of the L11 operon by binding to its mRNA. This chain is Large ribosomal subunit protein uL1, found in Wigglesworthia glossinidia brevipalpis.